A 432-amino-acid chain; its full sequence is Homogentisate 1,2-dioxygenase (432 aa).

The active-site Proton acceptor is H286. Fe cation contacts are provided by H329 and E335. Positions 344 and 365 each coordinate homogentisate. H365 contributes to the Fe cation binding site.

This sequence belongs to the homogentisate dioxygenase family. As to quaternary structure, hexamer; dimer of trimers. Fe cation serves as cofactor.

The catalysed reaction is homogentisate + O2 = 4-maleylacetoacetate + H(+). It functions in the pathway amino-acid degradation; L-phenylalanine degradation; acetoacetate and fumarate from L-phenylalanine: step 4/6. Functionally, involved in the catabolism of homogentisate (2,5-dihydroxyphenylacetate or 2,5-OH-PhAc), a central intermediate in the degradation of phenylalanine and tyrosine. Catalyzes the oxidative ring cleavage of the aromatic ring of homogentisate to yield maleylacetoacetate. This chain is Homogentisate 1,2-dioxygenase, found in Bordetella petrii (strain ATCC BAA-461 / DSM 12804 / CCUG 43448).